We begin with the raw amino-acid sequence, 620 residues long: bZIP transcription factor 49 (620 aa).

The Cytoplasmic segment spans residues 1 to 287 (MAEPVLEDTY…VAKVKKFKKV (287 aa)). Residues 109–135 (SSCYNRESPTDSDFSGTSQSLSFSGQD) are compositionally biased toward polar residues. The segment at 109-155 (SSCYNRESPTDSDFSGTSQSLSFSGQDSAKRKTEIEEDSSDESRRLG) is disordered. The 64-residue stretch at 172–235 (EKKKNVRLVR…VTLRQQMGTR (64 aa)) folds into the bZIP domain. The basic motif stretch occupies residues 173–205 (KKKNVRLVRNRESAHLSRQRKKHYVEELEDKVK). A leucine-zipper region spans residues 211–218 (ISELSSKM). Residues 288–308 (ASFSVFGFLFCMFLFGALVNI) form a helical membrane-spanning segment. The Lumenal segment spans residues 309–620 (SYGEYKSNYV…RPDVPHLMTS (312 aa)). 3 disordered regions span residues 343–364 (DSDQ…PRNS), 398–460 (ARDS…SNDQ), and 505–557 (PASP…RETK). Residues asparagine 351 and asparagine 363 are each glycosylated (N-linked (GlcNAc...) asparagine). Residues 352-364 (VSETENLGPPRNS) are compositionally biased toward polar residues. Composition is skewed to basic and acidic residues over residues 398 to 409 (ARDSETKNEEGK) and 432 to 441 (RTRDVSKHLY). Polar residues-rich tracts occupy residues 447–460 (GLSS…SNDQ) and 508–519 (PHTQQCKNTSDT). N-linked (GlcNAc...) asparagine glycosylation occurs at asparagine 515. An RRIL cleavage motif motif is present at residues 526 to 529 (RRIL). N-linked (GlcNAc...) asparagine glycosylation is found at asparagine 539 and asparagine 546. The segment covering 540–557 (LTKEDHNSSSKDKFRETK) has biased composition (basic and acidic residues).

The protein belongs to the bZIP family. Interacts with BZIP28.

Its subcellular location is the endoplasmic reticulum membrane. It is found in the nucleus. Functionally, transcriptional activator involved in stress responses. This chain is bZIP transcription factor 49, found in Arabidopsis thaliana (Mouse-ear cress).